The sequence spans 514 residues: Beta-glucosidase 16 (514 aa).

The first 21 residues, 1-21 (MRGKFLSLLLLITLACIGVSA), serve as a signal peptide directing secretion. Gln-49 is an a beta-D-glucoside binding site. Asn-80 is a glycosylation site (N-linked (GlcNAc...) asparagine). Residues His-153 and 198–199 (NE) each bind a beta-D-glucoside. The active-site Proton donor is Glu-199. Residues Cys-218 and Cys-226 are joined by a disulfide bond. Tyr-343 is an a beta-D-glucoside binding site. Asn-357 carries an N-linked (GlcNAc...) asparagine glycan. A beta-D-glucoside is bound by residues Glu-413, Trp-458, 465–466 (EW), and Phe-474. Catalysis depends on Glu-413, which acts as the Nucleophile.

This sequence belongs to the glycosyl hydrolase 1 family. Expressed at low levels in cauline leaves and flowers.

It carries out the reaction Hydrolysis of terminal, non-reducing beta-D-glucosyl residues with release of beta-D-glucose.. The polypeptide is Beta-glucosidase 16 (Arabidopsis thaliana (Mouse-ear cress)).